We begin with the raw amino-acid sequence, 192 residues long: MTPSVPADGARLIYLMGASGSGKDTLLRLLRAELRGDEPVLVAHRYITRDSGDTEDALRLTEDEFGRRAALGCFALRWASHGLQYGIGIEIDAWLSCGAAVIINGSRAHLEQAHSRYPALTAVEVTVDPGQLARRLAGRGRESAEQIAQRLARATQPFPVPLQCQLLRVSNDAAPETAAATLLDIARGKLAA.

The protein belongs to the ribose 1,5-bisphosphokinase family.

The catalysed reaction is alpha-D-ribose 1,5-bisphosphate + ATP = 5-phospho-alpha-D-ribose 1-diphosphate + ADP. It functions in the pathway metabolic intermediate biosynthesis; 5-phospho-alpha-D-ribose 1-diphosphate biosynthesis; 5-phospho-alpha-D-ribose 1-diphosphate from D-ribose 5-phosphate (route II): step 3/3. Functionally, catalyzes the phosphorylation of ribose 1,5-bisphosphate to 5-phospho-D-ribosyl alpha-1-diphosphate (PRPP). The chain is Ribose 1,5-bisphosphate phosphokinase PhnN from Achromobacter xylosoxidans (strain A8).